We begin with the raw amino-acid sequence, 75 residues long: Small ribosomal subunit protein bS18 (75 aa).

This sequence belongs to the bacterial ribosomal protein bS18 family. As to quaternary structure, part of the 30S ribosomal subunit. Forms a tight heterodimer with protein bS6.

Functionally, binds as a heterodimer with protein bS6 to the central domain of the 16S rRNA, where it helps stabilize the platform of the 30S subunit. The protein is Small ribosomal subunit protein bS18 of Alteromonas mediterranea (strain DSM 17117 / CIP 110805 / LMG 28347 / Deep ecotype).